The following is a 110-amino-acid chain: Large ribosomal subunit protein uL22 (110 aa).

It belongs to the universal ribosomal protein uL22 family. Part of the 50S ribosomal subunit.

This protein binds specifically to 23S rRNA; its binding is stimulated by other ribosomal proteins, e.g. L4, L17, and L20. It is important during the early stages of 50S assembly. It makes multiple contacts with different domains of the 23S rRNA in the assembled 50S subunit and ribosome. Its function is as follows. The globular domain of the protein is located near the polypeptide exit tunnel on the outside of the subunit, while an extended beta-hairpin is found that lines the wall of the exit tunnel in the center of the 70S ribosome. The chain is Large ribosomal subunit protein uL22 from Shewanella loihica (strain ATCC BAA-1088 / PV-4).